The sequence spans 417 residues: NADH-dependent phenylglyoxylate dehydrogenase subunit alpha (417 aa).

As to quaternary structure, dimer of heteropentamers composed of an alpha (PadG), a beta (PadI), a gamma (PadE), a delta (PadF) and an epsilon (PadH) subunit.

It catalyses the reaction phenylglyoxylate + NAD(+) + CoA = benzoyl-CoA + CO2 + NADH. Activated by magnesium ions and thiamine diphosphate. Functionally, involved in the anaerobic metabolism of phenylalanine and phenylacetate. Catalyzes the oxidative decarboxylation of phenylglyoxylate to benzoyl-CoA and CO(2). It can also react slowly with 2-oxo-3-methylbutanoate and use different electron acceptors such as benzyl viologen, methyl viologen, FAD or FMN, but NAD seems to be the physiological electron acceptor. Also catalyzes an isotope exchange between CO(2) and the carboxyl group which proves partial or complete reversibility of the oxidative decarboxylation reaction. The polypeptide is NADH-dependent phenylglyoxylate dehydrogenase subunit alpha (padG) (Aromatoleum evansii (Azoarcus evansii)).